The sequence spans 141 residues: Cystatin-SN (141 aa).

A signal peptide spans 1 to 20 (MAQYLSTLLLLLATLAVALA). Positions 76 to 80 (QTVGG) match the Secondary area of contact motif. 2 disulfide bridges follow: Cys-94/Cys-104 and Cys-118/Cys-138.

This sequence belongs to the cystatin family. In terms of tissue distribution, expressed in submandibular and sublingual saliva but not in parotid saliva (at protein level). Expressed in saliva, tears, urine and seminal fluid.

It localises to the secreted. Human saliva appears to contain several cysteine proteinase inhibitors that are immunologically related to cystatin S but that differ in their specificity due to amino acid sequence differences. Cystatin SN, with a pI of 7.5, is a much better inhibitor of papain and dipeptidyl peptidase I than is cystatin S, although both inhibit ficin equally well. This Homo sapiens (Human) protein is Cystatin-SN (CST1).